The primary structure comprises 322 residues: Ferredoxin--NADP reductase (322 aa).

FAD contacts are provided by Asp-34, Gln-42, Tyr-47, Val-87, Phe-120, Asp-279, and Thr-320.

The protein belongs to the ferredoxin--NADP reductase type 2 family. As to quaternary structure, homodimer. FAD serves as cofactor.

It catalyses the reaction 2 reduced [2Fe-2S]-[ferredoxin] + NADP(+) + H(+) = 2 oxidized [2Fe-2S]-[ferredoxin] + NADPH. The sequence is that of Ferredoxin--NADP reductase from Streptococcus pneumoniae (strain Hungary19A-6).